A 197-amino-acid polypeptide reads, in one-letter code: Glycerol-3-phosphate acyltransferase (197 aa).

Transmembrane regions (helical) follow at residues 7 to 27 (PSIA…LLLT), 56 to 76 (LAAL…WIAW), 82 to 102 (DIGW…WLGF), 116 to 136 (FGLG…MLAI), and 157 to 177 (YFGR…IIWL).

The protein belongs to the PlsY family. Probably interacts with PlsX.

It localises to the cell inner membrane. The enzyme catalyses an acyl phosphate + sn-glycerol 3-phosphate = a 1-acyl-sn-glycero-3-phosphate + phosphate. The protein operates within lipid metabolism; phospholipid metabolism. In terms of biological role, catalyzes the transfer of an acyl group from acyl-phosphate (acyl-PO(4)) to glycerol-3-phosphate (G3P) to form lysophosphatidic acid (LPA). This enzyme utilizes acyl-phosphate as fatty acyl donor, but not acyl-CoA or acyl-ACP. This is Glycerol-3-phosphate acyltransferase from Erythrobacter litoralis (strain HTCC2594).